Reading from the N-terminus, the 233-residue chain is MAKLTKRARLIREKVEVTKNYDINEAVALLKELATAKFVESVDVAVNLGVDPRKSDQNVRGATVLPHGTGREVRVAVFTQGANAEAATAAGAELVGMDELAAQVKAGEMNFDVVIASPDAMRVVGQLGQILGPRGLMPNPKTGTVTPNVAEAVKNAKAGQVRYRNDKNGIIHTTIGKVDFETAQLKENLEALLAALKKAKPAAAKGVFLKKVSISTTMGAGVAVDQSTLEDVK.

Belongs to the universal ribosomal protein uL1 family. Part of the 50S ribosomal subunit.

In terms of biological role, binds directly to 23S rRNA. The L1 stalk is quite mobile in the ribosome, and is involved in E site tRNA release. Functionally, protein L1 is also a translational repressor protein, it controls the translation of the L11 operon by binding to its mRNA. This Shewanella piezotolerans (strain WP3 / JCM 13877) protein is Large ribosomal subunit protein uL1.